A 277-amino-acid chain; its full sequence is Acetyl-coenzyme A carboxylase carboxyl transferase subunit beta (277 aa).

A CoA carboxyltransferase N-terminal domain is found at 22-277 (LWTKCPGCNR…TLKQLLYFLT (256 aa)). Zn(2+) contacts are provided by cysteine 26, cysteine 29, cysteine 45, and cysteine 48. Residues 26–48 (CPGCNRFLYTKELELNQSVCHYC) form a C4-type zinc finger.

Belongs to the AccD/PCCB family. As to quaternary structure, acetyl-CoA carboxylase is a heterohexamer composed of biotin carboxyl carrier protein (AccB), biotin carboxylase (AccC) and two subunits each of ACCase subunit alpha (AccA) and ACCase subunit beta (AccD). Requires Zn(2+) as cofactor.

It localises to the cytoplasm. The catalysed reaction is N(6)-carboxybiotinyl-L-lysyl-[protein] + acetyl-CoA = N(6)-biotinyl-L-lysyl-[protein] + malonyl-CoA. The protein operates within lipid metabolism; malonyl-CoA biosynthesis; malonyl-CoA from acetyl-CoA: step 1/1. In terms of biological role, component of the acetyl coenzyme A carboxylase (ACC) complex. Biotin carboxylase (BC) catalyzes the carboxylation of biotin on its carrier protein (BCCP) and then the CO(2) group is transferred by the transcarboxylase to acetyl-CoA to form malonyl-CoA. This is Acetyl-coenzyme A carboxylase carboxyl transferase subunit beta from Methylacidiphilum infernorum (isolate V4) (Methylokorus infernorum (strain V4)).